The chain runs to 336 residues: MGSGEEPSQMRRALVDSLAGAISGGISRTVTSPLDVIKIRFQVQLEPTTSWGILRRDIYGPSKYTGLLQATKDILREEGLPGFWRGNVPALLMYMPYTAIQFTVLHKLKTFASGSSKTEDHLHLSPYLSYVSGALAGCAATIGSYPFDLLRTILASQGEPKIYPNMRSAFVDIIKTRGVQGLYSGLSPTLVEIIPYAGLQFGSYDTFKRSMMTWNRYKYSHLNFGSEDDSVSSFQLFLCGFAAGTFSKAACHPLDVVKKRFQIEGLKRHPRYGARIESSTYKGMYHALKEIVAKEGFGGLYKGLFPSLVKSAPAGAVTFVAYEYISDWIGSKAGVE.

The next 6 helical transmembrane spans lie at 11 to 27 (RRAL…GGIS), 88 to 105 (VPAL…FTVL), 127 to 150 (YLSY…FDLL), 182 to 199 (LYSG…YAGL), 230 to 246 (SVSS…AGTF), and 303 to 322 (GLFP…FVAY). 3 Solcar repeats span residues 11–111 (RRAL…LKTF), 124–210 (LSPY…FKRS), and 231–328 (VSSF…ISDW).

Belongs to the mitochondrial carrier (TC 2.A.29) family. In terms of tissue distribution, ubiquitous.

The protein localises to the mitochondrion inner membrane. Mitochondrial transporter that mediates uptake of thiamine diphosphate (ThDP) into mitochondria. The polypeptide is Mitochondrial thiamine diphosphate carrier 2 (Zea mays (Maize)).